The following is a 1437-amino-acid chain: Myomesin-3 (1437 aa).

A disordered region spans residues 1 to 49; the sequence is MTLPHSLGGAGDPRPPQAMEVHRLEHRQEEEQKEERQHSLRMGSSVRRR. Residues 20–38 show a composition bias toward basic and acidic residues; sequence EVHRLEHRQEEEQKEERQH. The stretch at 120 to 149 forms a coiled coil; that stretch reads RLLRQRRDWKTLRRRTEEKVQEAKELRELC. 2 consecutive Ig-like C2-type domains span residues 154–246 and 269–361; these read PWFW…AKVL and PSVE…TYVL. Fibronectin type-III domains are found at residues 375–469, 503–598, 604–696, 702–797, and 804–899; these read SPLN…VMGD, PPTN…LRGP, PPAQ…VKQA, APYG…CKEW, and PPYD…LEDK. Ig-like C2-type domains follow at residues 1120–1205 and 1334–1423; these read PYFE…LDLT and AKVV…VTIS.

In terms of assembly, homodimer.

The protein resides in the cytoplasm. It is found in the myofibril. The protein localises to the sarcomere. Its subcellular location is the m line. In terms of biological role, may link the intermediate filament cytoskeleton to the M-disk of the myofibrils in striated muscle. In Homo sapiens (Human), this protein is Myomesin-3 (MYOM3).